The chain runs to 1030 residues: Importin beta-like SAD2 homolog (1030 aa).

Methionine 1 bears the N-acetylmethionine mark. Residues 25-99 (AEQSLNQLQH…RNQILVFVSQ (75 aa)) form the Importin N-terminal domain. Disordered regions lie at residues 886–928 (AAKA…GSTL) and 940–964 (SYSD…PIDE). Composition is skewed to acidic residues over residues 890–924 (EEEE…DETD) and 943–964 (DDDD…PIDE).

It belongs to the importin beta family.

It is found in the cytoplasm. The protein resides in the nucleus. In terms of biological role, functions probably in nuclear protein import, either by acting as autonomous nuclear transport receptor or as an adapter-like protein in association with other importin subunits. This is Importin beta-like SAD2 homolog from Arabidopsis thaliana (Mouse-ear cress).